The sequence spans 483 residues: Regulatory protein ViaA (483 aa).

Belongs to the ViaA family. As to quaternary structure, homodimer. Interacts with RavA.

It is found in the cytoplasm. In terms of biological role, component of the RavA-ViaA chaperone complex, which may act on the membrane to optimize the function of some of the respiratory chains. ViaA stimulates the ATPase activity of RavA. In Escherichia coli O9:H4 (strain HS), this protein is Regulatory protein ViaA.